Here is a 26-residue protein sequence, read N- to C-terminus: GIGAILKVLATGLPTLISWIKNKRKQ.

Glycine 1 is modified (N-formylglycine; partial). Glutamine 26 is subject to Glutamine amide.

The protein belongs to the melittin family. As to quaternary structure, monomer (in solution and for integration into membranes), homotetramer (in solution and potentially as a toroidal pore in membranes), and potenially homomultimer (as a toroidal pore in membranes). Expressed by the venom gland.

It is found in the secreted. The protein localises to the target cell membrane. In terms of biological role, main toxin of bee venom with strong hemolytic activity and antimicrobial activity. It has enhancing effects on bee venom phospholipase A2 activity. This amphipathic toxin binds to negatively charged membrane surface and forms pore by inserting into lipid bilayers inducing the leakage of ions and molecules and the enhancement of permeability that ultimately leads to cell lysis. It acts as a voltage-gated pore with higher selectivity for anions over cations. The ion conductance has been shown to be voltage-dependent. Self-association of melittin in membranes is promoted by high ionic strength, but not by the presence of negatively charged lipids. In vivo, intradermal injection into healthy human volunteers produce sharp pain sensation and an inflammatory response. It produces pain by activating primary nociceptor cells directly and indirectly due to its ability to activate plasma membrane phospholipase A2 and its pore-forming activity. The sequence is that of Melittin (MELT) from Apis florea (Dwarf honeybee).